The primary structure comprises 458 residues: Probable beta-eliminating lyase (458 aa).

An N6-(pyridoxal phosphate)lysine modification is found at Lys-257.

Belongs to the beta-eliminating lyase family. Pyridoxal 5'-phosphate is required as a cofactor.

In Trichomonas vaginalis (strain ATCC PRA-98 / G3), this protein is Probable beta-eliminating lyase.